Here is a 104-residue protein sequence, read N- to C-terminus: Large ribosomal subunit protein uL23 (104 aa).

The protein belongs to the universal ribosomal protein uL23 family. As to quaternary structure, part of the 50S ribosomal subunit. Contacts protein L29, and trigger factor when it is bound to the ribosome.

Functionally, one of the early assembly proteins it binds 23S rRNA. One of the proteins that surrounds the polypeptide exit tunnel on the outside of the ribosome. Forms the main docking site for trigger factor binding to the ribosome. In Polynucleobacter asymbioticus (strain DSM 18221 / CIP 109841 / QLW-P1DMWA-1) (Polynucleobacter necessarius subsp. asymbioticus), this protein is Large ribosomal subunit protein uL23.